The following is a 948-amino-acid chain: Probable DNA-directed RNA polymerase (948 aa).

Residues aspartate 600, lysine 680, and aspartate 853 contribute to the active site.

Belongs to the phage and mitochondrial RNA polymerase family.

It is found in the mitochondrion. The catalysed reaction is RNA(n) + a ribonucleoside 5'-triphosphate = RNA(n+1) + diphosphate. Its function is as follows. DNA-dependent RNA polymerase catalyzes the transcription of DNA into RNA using the four ribonucleoside triphosphates as substrates. This chain is Probable DNA-directed RNA polymerase, found in Podospora anserina (Pleurage anserina).